A 343-amino-acid chain; its full sequence is Mitochondrial amidoxime-reducing component 1 (343 aa).

Over 1–25 (MSNTVFSGAVGPLRAAALSISRHRL) the chain is Mitochondrial matrix. Residues 26–44 (PLLCAAGLGLTAVASWMWW) traverse the membrane as a helical; Signal-anchor for type II membrane protein segment. The Cytoplasmic portion of the chain corresponds to 45-343 (RKRQGEAEDL…DPVYRVTRKG (299 aa)). Mo-molybdopterin is bound by residues Lys-69, Ser-70, and Arg-94. The interval 95–186 (HWLVVTEEGN…SSQPYRLVHF (92 aa)) is MOSC N-terminal region. Positions 181 to 339 (YRLVHFEADV…IRVGDPVYRV (159 aa)) constitute an MOSC domain. Ser-215, Arg-242, Arg-276, Cys-277, and Tyr-321 together coordinate Mo-molybdopterin.

Mo-molybdopterin is required as a cofactor.

It is found in the mitochondrion outer membrane. It localises to the membrane. The catalysed reaction is N(omega)-hydroxy-L-arginine + 2 Fe(II)-[cytochrome b5] + 2 H(+) = L-arginine + 2 Fe(III)-[cytochrome b5] + H2O. In terms of biological role, catalyzes the reduction of N-oxygenated molecules, acting as a counterpart of cytochrome P450 and flavin-containing monooxygenases in metabolic cycles. As a component of prodrug-converting system, reduces a multitude of N-hydroxylated prodrugs particularly amidoximes, leading to increased drug bioavailability. May be involved in mitochondrial N(omega)-hydroxy-L-arginine (NOHA) reduction, regulating endogenous nitric oxide levels and biosynthesis. Postulated to cleave the N-OH bond of N-hydroxylated substrates in concert with electron transfer from NADH to cytochrome b5 reductase then to cytochrome b5, the ultimate electron donor that primes the active site for substrate reduction. The sequence is that of Mitochondrial amidoxime-reducing component 1 (mtarc1) from Xenopus laevis (African clawed frog).